The chain runs to 76 residues: Putative membrane protein insertion efficiency factor (76 aa).

This sequence belongs to the UPF0161 family.

The protein resides in the cell inner membrane. Functionally, could be involved in insertion of integral membrane proteins into the membrane. This Paraburkholderia phytofirmans (strain DSM 17436 / LMG 22146 / PsJN) (Burkholderia phytofirmans) protein is Putative membrane protein insertion efficiency factor.